An 805-amino-acid polypeptide reads, in one-letter code: Leucine--tRNA ligase (805 aa).

Residues 40-51 (PYPSGSGLHVGH) carry the 'HIGH' region motif. The 'KMSKS' region signature appears at 576 to 580 (KMSKS). Residue Lys579 coordinates ATP.

This sequence belongs to the class-I aminoacyl-tRNA synthetase family.

It localises to the cytoplasm. It carries out the reaction tRNA(Leu) + L-leucine + ATP = L-leucyl-tRNA(Leu) + AMP + diphosphate. The chain is Leucine--tRNA ligase from Chlorobium phaeovibrioides (strain DSM 265 / 1930) (Prosthecochloris vibrioformis (strain DSM 265)).